The following is a 188-amino-acid chain: Probable nicotinate-nucleotide adenylyltransferase (188 aa).

Belongs to the NadD family.

It carries out the reaction nicotinate beta-D-ribonucleotide + ATP + H(+) = deamido-NAD(+) + diphosphate. It functions in the pathway cofactor biosynthesis; NAD(+) biosynthesis; deamido-NAD(+) from nicotinate D-ribonucleotide: step 1/1. In terms of biological role, catalyzes the reversible adenylation of nicotinate mononucleotide (NaMN) to nicotinic acid adenine dinucleotide (NaAD). The chain is Probable nicotinate-nucleotide adenylyltransferase from Salinispora tropica (strain ATCC BAA-916 / DSM 44818 / JCM 13857 / NBRC 105044 / CNB-440).